A 710-amino-acid polypeptide reads, in one-letter code: MQGKKPGGSSGGGRSGELQGDEAQRNKKKKKKVSCFSNIKIFLVSECALMLAQGTVGAYLVSVLTTLERRFNLQSADVGVIASSFEIGNLALILFVSYFGARGHRPRLIGCGGIVMALGALLSALPEFLTHQYKYEAGEIRWGAEGRDVCATNGSSSDEGPDPDLICRNRTATNMMYLLLIGAQVLLGIGATPVQPLGVSYIDDHVRRKDSSLYIGILFTMLVFGPACGFILGSFCTKIYVDAVFIDTSNLDITPDDPRWIGAWWGGFLLCGALLFFSSLLMFGFPQSLPPHSDPGMESEQAMLPEREYERPKPSNGVLRHPLEPDSSASCFQQLRVIPKVTKHLLSNPVFTCIVLAACMEIAVVAGFAAFLGKYLEQQFNLTTSSANQLLGMTAIPCACLGIFLGGLLVKKLSLSALGAIRMAMLVNLVSTACYVSFLFLGCDTGPVAGVTVRYGNNSARGSALDPYSPCNNNCECQTDSFTPVCGADGITYLSACFAGCNSTNLTGCACLTTVPPENASVVPGKCPSPGCQEAFLTFLCVMCVCSLIGAMAQTPSVIILIRTVSPELKSYALGVLFLLLRLLGFIPPPLIFGAGIDSTCLFWSTFCGEQGACVLYDNVVYRYLYVSIAIALKSFAFILYTTTWQCLRKNYKRYIKNHEGGLSTSEFFASTLTLDNLGRDPVPAHQTHRTKFIYNLEDHEWCENMESVL.

Residue M1 is modified to N-acetylmethionine. A compositionally biased stretch (gly residues) spans 1–15 (MQGKKPGGSSGGGRS). A disordered region spans residues 1–25 (MQGKKPGGSSGGGRSGELQGDEAQR). The Cytoplasmic portion of the chain corresponds to 1 to 40 (MQGKKPGGSSGGGRSGELQGDEAQRNKKKKKKVSCFSNIK). A helical membrane pass occupies residues 41 to 60 (IFLVSECALMLAQGTVGAYL). At 61–79 (VSVLTTLERRFNLQSADVG) the chain is on the extracellular side. Residues 80-100 (VIASSFEIGNLALILFVSYFG) form a helical membrane-spanning segment. Topologically, residues 101–106 (ARGHRP) are cytoplasmic. Residues 107–131 (RLIGCGGIVMALGALLSALPEFLTH) traverse the membrane as a helical segment. At 132 to 174 (QYKYEAGEIRWGAEGRDVCATNGSSSDEGPDPDLICRNRTATN) the chain is on the extracellular side. Residues N153 and N169 are each glycosylated (N-linked (GlcNAc...) asparagine). Residues 175 to 203 (MMYLLLIGAQVLLGIGATPVQPLGVSYID) traverse the membrane as a helical segment. The Cytoplasmic portion of the chain corresponds to 204 to 222 (DHVRRKDSSLYIGILFTML). A helical transmembrane segment spans residues 223-243 (VFGPACGFILGSFCTKIYVDA). Residues 244 to 261 (VFIDTSNLDITPDDPRWI) are Extracellular-facing. The chain crosses the membrane as a helical span at residues 262–286 (GAWWGGFLLCGALLFFSSLLMFGFP). The Cytoplasmic segment spans residues 287 to 344 (QSLPPHSDPGMESEQAMLPEREYERPKPSNGVLRHPLEPDSSASCFQQLRVIPKVTKH). A helical membrane pass occupies residues 345–366 (LLSNPVFTCIVLAACMEIAVVA). Over 367-386 (GFAAFLGKYLEQQFNLTTSS) the chain is Extracellular. An N-linked (GlcNAc...) asparagine glycan is attached at N381. Residues 387–410 (ANQLLGMTAIPCACLGIFLGGLLV) traverse the membrane as a helical segment. The Cytoplasmic portion of the chain corresponds to 411–414 (KKLS). The chain crosses the membrane as a helical span at residues 415–438 (LSALGAIRMAMLVNLVSTACYVSF). The Extracellular segment spans residues 439 to 539 (LFLGCDTGPV…PGCQEAFLTF (101 aa)). N457 is a glycosylation site (N-linked (GlcNAc...) asparagine). A Kazal-like domain is found at 465-513 (LDPYSPCNNNCECQTDSFTPVCGADGITYLSACFAGCNSTNLTGCACLT). 3 cysteine pairs are disulfide-bonded: C471–C497, C475–C486, and C477–C501. N502, N505, and N519 each carry an N-linked (GlcNAc...) asparagine glycan. Residues 540 to 562 (LCVMCVCSLIGAMAQTPSVIILI) traverse the membrane as a helical segment. Over 563-571 (RTVSPELKS) the chain is Cytoplasmic. Residues 572-597 (YALGVLFLLLRLLGFIPPPLIFGAGI) form a helical membrane-spanning segment. Topologically, residues 598–630 (DSTCLFWSTFCGEQGACVLYDNVVYRYLYVSIA) are extracellular. The helical transmembrane segment at 631 to 648 (IALKSFAFILYTTTWQCL) threads the bilayer. Topologically, residues 649 to 705 (RKNYKRYIKNHEGGLSTSEFFASTLTLDNLGRDPVPAHQTHRTKFIYNLEDHEWCEN) are cytoplasmic.

Belongs to the organo anion transporter (TC 2.A.60) family. Widely expressed.

It is found in the basolateral cell membrane. The protein localises to the apical cell membrane. It localises to the basal cell membrane. The enzyme catalyses L-thyroxine(out) = L-thyroxine(in). It catalyses the reaction prostaglandin E1(out) = prostaglandin E1(in). The catalysed reaction is prostaglandin E2(out) = prostaglandin E2(in). It carries out the reaction prostaglandin F2alpha(out) = prostaglandin F2alpha(in). The enzyme catalyses (5Z,8Z,11Z,14Z)-eicosatetraenoate(out) = (5Z,8Z,11Z,14Z)-eicosatetraenoate(in). It catalyses the reaction taurocholate(out) = taurocholate(in). The catalysed reaction is glycocholate(out) = glycocholate(in). It carries out the reaction estrone 3-sulfate(out) = estrone 3-sulfate(in). The enzyme catalyses argipressin(out) = argipressin(in). In terms of biological role, putative organic anion antiporter with apparent broad substrate specificity. Recognizes various substrates including thyroid hormone L-thyroxine, prostanoids such as prostaglandin E1 and E2, bile acids such as taurocholate, glycolate and glycochenodeoxycholate and peptide hormones such as L-arginine vasopressin, likely operating in a tissue-specific manner. The transport mechanism, its electrogenicity and potential tissue-specific counterions remain to be elucidated. The protein is Solute carrier organic anion transporter family member 3A1 (Slco3a1) of Mus musculus (Mouse).